Reading from the N-terminus, the 79-residue chain is D-alanyl carrier protein (79 aa).

The Carrier domain maps to 1–77; that stretch reads MDVKAEVIEI…KIVEGVTELR (77 aa). An O-(pantetheine 4'-phosphoryl)serine modification is found at Ser35.

The protein belongs to the DltC family. 4'-phosphopantetheine is transferred from CoA to a specific serine of apo-DCP.

The protein resides in the cytoplasm. It functions in the pathway cell wall biogenesis; lipoteichoic acid biosynthesis. Carrier protein involved in the D-alanylation of lipoteichoic acid (LTA). The loading of thioester-linked D-alanine onto DltC is catalyzed by D-alanine--D-alanyl carrier protein ligase DltA. The DltC-carried D-alanyl group is further transferred to cell membrane phosphatidylglycerol (PG) by forming an ester bond, probably catalyzed by DltD. D-alanylation of LTA plays an important role in modulating the properties of the cell wall in Gram-positive bacteria, influencing the net charge of the cell wall. In Streptococcus gordonii (strain Challis / ATCC 35105 / BCRC 15272 / CH1 / DL1 / V288), this protein is D-alanyl carrier protein.